The sequence spans 291 residues: Elongation factor Ts (291 aa).

The segment at 82-85 (TDFC) is involved in Mg(2+) ion dislocation from EF-Tu.

It belongs to the EF-Ts family.

It is found in the cytoplasm. Associates with the EF-Tu.GDP complex and induces the exchange of GDP to GTP. It remains bound to the aminoacyl-tRNA.EF-Tu.GTP complex up to the GTP hydrolysis stage on the ribosome. The chain is Elongation factor Ts from Methylobacillus flagellatus (strain ATCC 51484 / DSM 6875 / VKM B-1610 / KT).